A 134-amino-acid chain; its full sequence is Thionin-2.1 (134 aa).

The N-terminal stretch at 1 to 24 (MKGRILILSLLIMSLVMAQVQVEA) is a signal peptide. 3 disulfide bridges follow: Cys27–Cys61, Cys28–Cys55, and Cys40–Cys49. A propeptide spans 68 to 134 (AILENSADAT…VVPPGPPKLL (67 aa)) (acidic domain).

It belongs to the plant thionin (TC 1.C.44) family. Detected in rosette leaves and at a very high level in flowers and in siliques.

Its subcellular location is the secreted. Functionally, seems to function as a defense factor. Thionins are small plant proteins which are toxic to animal cells. They seem to exert their toxic effect at the level of the cell membrane. Their precise function is not known. The chain is Thionin-2.1 (THI2.1) from Arabidopsis thaliana (Mouse-ear cress).